The following is a 66-amino-acid chain: Large ribosomal subunit protein uL29 (66 aa).

The protein belongs to the universal ribosomal protein uL29 family.

This chain is Large ribosomal subunit protein uL29, found in Rhizobium leguminosarum bv. trifolii (strain WSM2304).